Reading from the N-terminus, the 86-residue chain is Translation initiation factor IF-1 3 (86 aa).

In terms of domain architecture, S1-like spans 1–72; the sequence is MAKEELIEMQ…NKGRVTFRHI (72 aa).

It belongs to the IF-1 family. Component of the 30S ribosomal translation pre-initiation complex which assembles on the 30S ribosome in the order IF-2 and IF-3, IF-1 and N-formylmethionyl-tRNA(fMet); mRNA recruitment can occur at any time during PIC assembly.

The protein localises to the cytoplasm. Functionally, one of the essential components for the initiation of protein synthesis. Stabilizes the binding of IF-2 and IF-3 on the 30S subunit to which N-formylmethionyl-tRNA(fMet) subsequently binds. Helps modulate mRNA selection, yielding the 30S pre-initiation complex (PIC). Upon addition of the 50S ribosomal subunit IF-1, IF-2 and IF-3 are released leaving the mature 70S translation initiation complex. The protein is Translation initiation factor IF-1 3 of Acidovorax sp. (strain JS42).